The primary structure comprises 150 residues: Galectin-1 (150 aa).

Positions 9-141 (NQIKLQDDFK…FSSPVTVDIH (133 aa)) constitute a Galectin domain. A carbohydrate-binding residues include His51, Arg55, Asn64, and Glu75.

Homotetramer. Oligomerization is required for carbohydrate binding. In terms of tissue distribution, most abundant in fruiting bodies. Very low levels of expression in asexual vegetative mycelia.

The protein resides in the secreted. The protein localises to the extracellular space. Its subcellular location is the extracellular matrix. It localises to the cell wall. It is found in the endomembrane system. In terms of biological role, binds lactose. May play a role in fruiting body formation. The polypeptide is Galectin-1 (Cgl1) (Coprinopsis cinerea (strain Okayama-7 / 130 / ATCC MYA-4618 / FGSC 9003) (Inky cap fungus)).